The following is a 154-amino-acid chain: UPF0178 protein YaiI (154 aa).

The protein belongs to the UPF0178 family.

This chain is UPF0178 protein YaiI, found in Escherichia fergusonii (strain ATCC 35469 / DSM 13698 / CCUG 18766 / IAM 14443 / JCM 21226 / LMG 7866 / NBRC 102419 / NCTC 12128 / CDC 0568-73).